Consider the following 246-residue polypeptide: Probable transcriptional regulatory protein GWCH70_2524 (246 aa).

The protein belongs to the TACO1 family.

The protein localises to the cytoplasm. This chain is Probable transcriptional regulatory protein GWCH70_2524, found in Geobacillus sp. (strain WCH70).